The sequence spans 536 residues: Pentatricopeptide repeat-containing protein At2g06000 (536 aa).

12 PPR repeats span residues 102 to 136 (SFWTYNLLTRSLCKAGLHDLAGQMFECMKSDGVSP), 137 to 167 (NNRLLGFLVSSFAEKGKLHFATALLLQSFEV), 170 to 200 (CCMVVNSLLNTLVKLDRVEDAMKLFDEHLRF), 205 to 239 (DTKTFNILIRGLCGVGKAEKALELLGVMSGFGCEP), 240 to 274 (DIVTYNTLIQGFCKSNELNKASEMFKDVKSGSVCS), 276 to 310 (DVVTYTSMISGYCKAGKMREASSLLDDMLRLGIYP), 311 to 345 (TNVTFNVLVDGYAKAGEMLTAEEIRGKMISFGCFP), 346 to 380 (DVVTFTSLIDGYCRVGQVSQGFRLWEEMNARGMFP), 381 to 415 (NAFTYSILINALCNENRLLKARELLGQLASKDIIP), 416 to 450 (QPFMYNPVIDGFCKAGKVNEANVIVEEMEKKKCKP), 451 to 485 (DKITFTILIIGHCMKGRMFEAVSIFHKMVAIGCSP), and 486 to 523 (DKITVSSLLSCLLKAGMAKEAYHLNQIARKGQSNNVVP).

This sequence belongs to the PPR family. P subfamily.

The chain is Pentatricopeptide repeat-containing protein At2g06000 from Arabidopsis thaliana (Mouse-ear cress).